The primary structure comprises 830 residues: Frameshifted structural polyprotein (830 aa).

Positions 58-109 are disordered; it reads AIAPARPPKPKKKKTTKPKPKTQPKKINGKTQQQKKKDKQADKKKKKPGKRE. Residues 65–107 are compositionally biased toward basic residues; the sequence is PKPKKKKTTKPKPKTQPKKINGKTQQQKKKDKQADKKKKKPGK. A ribosome-binding region spans residues 94–106; that stretch reads KDKQADKKKKKPG. Cys-119 and Cys-134 are disulfide-bonded. The 149-residue stretch at 119–267 folds into the Peptidase S3 domain; sequence CIFEVKHEGK…RVTPEGSEEW (149 aa). Residues His-145, Asp-167, and Ser-219 each act as charge relay system in the active site. N-linked (GlcNAc...) asparagine; by host glycosylation is found at Asn-280, Asn-327, Asn-533, and Asn-595. The chain crosses the membrane as a helical span at residues 702-722; that stretch reads AVVGMSLLALISIFASCYMLV. Residues Cys-718, Cys-728, Cys-748, and Cys-749 are each lipidated (S-palmitoyl cysteine; by host). The transient transmembrane before p62-6K protein processing stretch occupies residues 728–748; it reads CLTPYALTPGAAVPWTLGILC. The next 2 membrane-spanning stretches (helical) occupy residues 771–791 and 793–813; these read ALFWLEFAAPVACILIITYCL and NVLCCCKSLSFLSATEPRGHR.

In terms of assembly, homodimer. Homomultimer. Interacts with host karyopherin KPNA4; this interaction allows the nuclear import of the viral capsid protein. Precursor of protein E3/E2: The precursor of protein E3/E2 and E1 form a heterodimer shortly after synthesis. Interacts with host IRAK1; the interaction leads to inhibition of IRAK1-dependent signaling. Processing of the precursor of protein E3/E2 into E2 and E3 results in a heterodimer of the spike glycoproteins E2 and E1. Spike at virion surface are constituted of three E2-E1 heterodimers. Interacts with 6K protein. Interacts with host MXRA8; this interaction mediates virus entry. Post-translationally, specific enzymatic cleavages in vivo yield mature proteins. Capsid protein is auto-cleaved during polyprotein translation, unmasking a signal peptide at the N-terminus of the precursor of E3/E2. The remaining polyprotein is then targeted to the host endoplasmic reticulum, where host signal peptidase cleaves it into pE2 and TF. pE2 is further processed to mature E3 and E2 by host furin in trans-Golgi vesicle.

The protein resides in the virion. Its subcellular location is the host cytoplasm. It localises to the host cell membrane. It is found in the host nucleus. The protein localises to the virion membrane. The catalysed reaction is Autocatalytic release of the core protein from the N-terminus of the togavirus structural polyprotein by hydrolysis of a -Trp-|-Ser- bond.. Functionally, forms an icosahedral capsid with a T=4 symmetry composed of 240 copies of the capsid protein surrounded by a lipid membrane through which penetrate 80 spikes composed of trimers of E1-E2 heterodimers. The capsid protein binds to the viral RNA genome at a site adjacent to a ribosome binding site for viral genome translation following genome release. Possesses a protease activity that results in its autocatalytic cleavage from the nascent structural protein. Following its self-cleavage, the capsid protein transiently associates with ribosomes, and within several minutes the protein binds to viral RNA and rapidly assembles into icosahedric core particles. The resulting nucleocapsid eventually associates with the cytoplasmic domain of the spike glycoprotein E2 at the cell membrane, leading to budding and formation of mature virions. In case of infection, new virions attach to target cells and after clathrin-mediated endocytosis their membrane fuses with the host endosomal membrane. This leads to the release of the nucleocapsid into the cytoplasm, followed by an uncoating event necessary for the genomic RNA to become accessible. The uncoating might be triggered by the interaction of capsid proteins with ribosomes. Binding of ribosomes would release the genomic RNA since the same region is genomic RNA-binding and ribosome-binding. Specifically inhibits interleukin-1 receptor-associated kinase 1/IRAK1-dependent signaling during viral entry, representing a means by which the alphaviruses may evade innate immune detection and activation prior to viral gene expression. Its function is as follows. Provides the signal sequence for p62 (E3/E2) translocation to the host endoplasmic reticulum. Mediates pH protection of E1 during secretory pathway trans- port. Plays a role in viral attachment to target host cell, by binding to the cell receptor. Synthesized as a p62 precursor which is processed by furin at the cell membrane just before virion budding, giving rise to E2-E1 heterodimer. The p62-E1 heterodimer is stable, whereas E2-E1 is unstable and dissociate at low pH. p62 is processed at the last step, presumably to avoid E1 fusion activation before its final export to cell surface. E2 C-terminus contains a transitory transmembrane that would be disrupted by palmitoylation, resulting in reorientation of the C-terminal tail from lumenal to cytoplasmic side. This step is critical since E2 C-terminus is involved in budding by interacting with capsid proteins. This release of E2 C-terminus in cytoplasm occurs lately in protein export, and precludes premature assembly of particles at the endoplasmic reticulum membrane. In terms of biological role, virion component that may play a role during viral assembly. The chain is Frameshifted structural polyprotein from Aedes (Middle-African hedgehog).